Reading from the N-terminus, the 169-residue chain is Cytochrome c oxidase subunit 4 isoform 1, mitochondrial (169 aa).

A mitochondrion-targeting transit peptide spans M1–R22. Residues A23–N98 are Mitochondrial matrix-facing. K29 is subject to N6-acetyllysine; alternate. Residue K29 is modified to N6-succinyllysine; alternate. K53 bears the N6-acetyllysine mark. Residues S56 and S58 each carry the phosphoserine modification. K60 carries the N6-acetyllysine; alternate modification. K60 is subject to N6-succinyllysine; alternate. K67 bears the N6-acetyllysine mark. A helical transmembrane segment spans residues E99–Y124. Topologically, residues V125 to K169 are mitochondrial intermembrane.

It belongs to the cytochrome c oxidase IV family. As to quaternary structure, component of the cytochrome c oxidase (complex IV, CIV), a multisubunit enzyme composed of 14 subunits. The complex is composed of a catalytic core of 3 subunits MT-CO1, MT-CO2 and MT-CO3, encoded in the mitochondrial DNA, and 11 supernumerary subunits COX4I1 (or COX4I2), COX5A, COX5B, COX6A2 (or COX6A1), COX6B1 (or COX6B2), COX6C, COX7A1 (or COX7A2), COX7B, COX7C, COX8B and NDUFA4, which are encoded in the nuclear genome. The complex exists as a monomer or a dimer and forms supercomplexes (SCs) in the inner mitochondrial membrane with NADH-ubiquinone oxidoreductase (complex I, CI) and ubiquinol-cytochrome c oxidoreductase (cytochrome b-c1 complex, complex III, CIII), resulting in different assemblies (supercomplex SCI(1)III(2)IV(1) and megacomplex MCI(2)III(2)IV(2)). Interacts with PHB2; the interaction decreases in absence of SPHK2. Interacts with AFG1L. Interacts with ABCB7; this interaction allows the regulation of cellular iron homeostasis and cellular reactive oxygen species (ROS) levels in cardiomyocytes. Interacts with FLVCR2; this interaction occurs in the absence of heme and is disrupted upon heme binding. Interacts with IRGC.

It is found in the mitochondrion inner membrane. Its pathway is energy metabolism; oxidative phosphorylation. Its function is as follows. Component of the cytochrome c oxidase, the last enzyme in the mitochondrial electron transport chain which drives oxidative phosphorylation. The respiratory chain contains 3 multisubunit complexes succinate dehydrogenase (complex II, CII), ubiquinol-cytochrome c oxidoreductase (cytochrome b-c1 complex, complex III, CIII) and cytochrome c oxidase (complex IV, CIV), that cooperate to transfer electrons derived from NADH and succinate to molecular oxygen, creating an electrochemical gradient over the inner membrane that drives transmembrane transport and the ATP synthase. Cytochrome c oxidase is the component of the respiratory chain that catalyzes the reduction of oxygen to water. Electrons originating from reduced cytochrome c in the intermembrane space (IMS) are transferred via the dinuclear copper A center (CU(A)) of subunit 2 and heme A of subunit 1 to the active site in subunit 1, a binuclear center (BNC) formed by heme A3 and copper B (CU(B)). The BNC reduces molecular oxygen to 2 water molecules using 4 electrons from cytochrome c in the IMS and 4 protons from the mitochondrial matrix. This is Cytochrome c oxidase subunit 4 isoform 1, mitochondrial (COX4I1) from Bos taurus (Bovine).